Reading from the N-terminus, the 400-residue chain is Putative zinc-binding protein ORF78 (400 aa).

Positions 9–33 are disordered; that stretch reads LPRKRRAVAQPRTRQPPPKVHREDT.

This chain is Putative zinc-binding protein ORF78 (ORF78), found in Ictalurid herpesvirus 1 (strain Auburn) (IcHV-1).